The sequence spans 459 residues: MSRLLTIRQAEELHKSIIAYLSANNLSNAASALRGELGLSEEVFDTGTMVKYETLLEKKWTSIVRLQKKIMDLEARCGALQTELNNATPTSLSKRNQDPASWLPKVPARYSLESHRNTINCLAFHPKFSSIASGSDDCMIKIWDWELGELETTLKGHTRAVLDVDYGNTQSGVLLASCSSDLSIKIWNPLEDYKNIRTLLGHEHSVSAVRFIPGRNLLTSASRDKDLRIWDVTTGFCVKTIQGHSGWVRDVCPSFDGNYLFSAGDDVTARLWDITNISNPEAKLTMVGHDHVIECCAVAPQTSYQYLAPMAGLKKEALSKMSAVEFTATGSRDKTIKVWDRRGSCLMTLVGHDNWVRAIVFHPGGKYLLSASDDKSIRCWDLSQDGKCVKTLSDAHGRFVTCLRWAPSVVKEVAPSAESANGQTDTNDLLKSKDNQPQVQIRCVVASGGVDQKLNIFAN.

Residues 9 to 41 form the LisH domain; that stretch reads QAEELHKSIIAYLSANNLSNAASALRGELGLSE. A coiled-coil region spans residues 61–88; it reads TSIVRLQKKIMDLEARCGALQTELNNAT. WD repeat units lie at residues 114 to 155, 157 to 197, 201 to 240, 243 to 282, 288 to 349, 351 to 390, 395 to 440, and 442 to 459; these read SHRN…TTLK, HTRA…KNIR, GHEH…CVKT, GHSG…NPEA, GHDH…LMTL, GHDN…KCVK, AHGR…PQVQ, and RCVV…IFAN.

This sequence belongs to the WD repeat LIS1/nudF family. As to quaternary structure, self-associates. Interacts with nudE and dynein.

Its subcellular location is the cytoplasm. The protein localises to the cytoskeleton. It is found in the spindle pole. Its function is as follows. Positively regulates the activity of the minus-end directed microtubule motor protein dynein. May enhance dynein-mediated microtubule sliding by targeting dynein to the microtubule plus end. Required for nuclear migration during vegetative growth as well as development. Required for retrograde early endosome (EE) transport from the hyphal tip. Required for localization of dynein to the mitotic spindle poles. Recruits additional proteins to the dynein complex at SPBs. The polypeptide is Nuclear distribution protein nudF 1 (Talaromyces marneffei (strain ATCC 18224 / CBS 334.59 / QM 7333) (Penicillium marneffei)).